The chain runs to 1317 residues: Nucleoporin NUP145 (1317 aa).

Polar residues predominate over residues 1-16 (MFNKSVNSGFTFGNQN). A disordered region spans residues 1–36 (MFNKSVNSGFTFGNQNTSTPTSTPAQPSSSLQFPQK). An FG 1 repeat occupies 12–13 (FG). Over residues 17 to 30 (TSTPTSTPAQPSSS) the composition is skewed to low complexity. A GLFG 1 repeat occupies 39 to 42 (GLFG). Residues 79–80 (FG) form an FG 2 repeat. The stretch at 89 to 92 (GLFG) is one GLFG 2 repeat. One copy of the FG 3 repeat lies at 106–107 (FG). A disordered region spans residues 133–165 (QNGGLFGNSNNNNITSTTQNGGLFGKPTTTPAG). GLFG repeat units lie at residues 136 to 139 (GLFG), 154 to 157 (GLFG), 168 to 171 (GLFG), and 181 to 184 (GLFG). Low complexity predominate over residues 139–164 (GNSNNNNITSTTQNGGLFGKPTTTPA). Residues 193–196 (GIFG) form a GLFG 7; approximate repeat. One copy of the GLFG 8 repeat lies at 206-209 (GLFG). The interval 249–278 (TSSLSDVNGKSDAEPKPIENRRTYSFSSSV) is disordered. A compositionally biased stretch (basic and acidic residues) spans 257–270 (GKSDAEPKPIENRR). Ser-273 bears the Phosphoserine mark. The short motif at 369 to 385 (RKLKIDSNRSAAKKLKL) is the Bipartite nuclear localization signal element. The interval 390-450 (PAITKKHMQD…NLNKQDGENT (61 aa)) is disordered. The interval 398 to 523 (QDEQDSSENE…FGKIVIFRSS (126 aa)) is required for autocatalytic cleavage. Phosphoserine occurs at positions 403, 404, and 414. A compositionally biased stretch (basic and acidic residues) spans 418–427 (IDRKENRDNN). Residues 428 to 444 (LDNTYLNGKEQSNNLNK) are compositionally biased toward polar residues. Positions 458–605 (SFGYWCSPSP…GTWTFKVNHF (148 aa)) constitute a Peptidase S59 domain. The segment at 460-604 (GYWCSPSPEQ…GGTWTFKVNH (145 aa)) is nucleoporin RNA-binding motif (NRM). A phosphoserine mark is found at Ser-667, Ser-679, and Ser-689. Position 751 is a phosphothreonine (Thr-751).

The protein belongs to the nucleoporin GLFG family. In terms of assembly, component of the nuclear pore complex (NPC). NPC constitutes the exclusive means of nucleocytoplasmic transport. NPCs allow the passive diffusion of ions and small molecules and the active, nuclear transport receptor-mediated bidirectional transport of macromolecules such as proteins, RNAs, ribonucleoparticles (RNPs), and ribosomal subunits across the nuclear envelope. Due to its 8-fold rotational symmetry, all subunits are present with 8 copies or multiples thereof. NUP145C is part of the heptameric 0.5 MDa autoassembling NUP84 NPC subcomplex (NUP84, NUP85, NUP120, NUP133, NUP145C, SEC13 and SEH1). NUP145N may bind homomeric RNA and interacts through its FG repeats with karyopherins. Interacts with MLP1 and MLP2. In terms of processing, NUP145 is autocatalytically cleaved in NUP145N and NUP145C.

The protein localises to the nucleus. It is found in the nuclear pore complex. Its subcellular location is the nucleus membrane. Its function is as follows. Functions as a component of the nuclear pore complex (NPC). NPC components, collectively referred to as nucleoporins (NUPs), can play the role of both NPC structural components and of docking or interaction partners for transiently associated nuclear transport factors. Active directional transport is assured by both, a Phe-Gly (FG) repeat affinity gradient for these transport factors across the NPC and a transport cofactor concentration gradient across the nuclear envelope (GSP1 and GSP2 GTPases associated predominantly with GTP in the nucleus, with GDP in the cytoplasm). NUP145 is autocatalytically cleaved in vivo in 2 polypeptides which assume different functions in the NPC. NUP145N as one of the FG repeat nucleoporins participates in karyopherin interactions and contains part of the autocatalytic cleavage activity. NUP145C as part of the NUP84 complex is involved in nuclear poly(A)+ RNA and tRNA export. It is also required for normal NPC distribution (probably through interactions with MLP1 and MLP2) and NPC assembly, as well as for normal nuclear envelope organization. In Saccharomyces cerevisiae (strain ATCC 204508 / S288c) (Baker's yeast), this protein is Nucleoporin NUP145 (NUP145).